The sequence spans 397 residues: Tryptophan synthase beta chain (397 aa).

An N6-(pyridoxal phosphate)lysine modification is found at Lys-87.

This sequence belongs to the TrpB family. Tetramer of two alpha and two beta chains. Pyridoxal 5'-phosphate is required as a cofactor.

The enzyme catalyses (1S,2R)-1-C-(indol-3-yl)glycerol 3-phosphate + L-serine = D-glyceraldehyde 3-phosphate + L-tryptophan + H2O. It participates in amino-acid biosynthesis; L-tryptophan biosynthesis; L-tryptophan from chorismate: step 5/5. In terms of biological role, the beta subunit is responsible for the synthesis of L-tryptophan from indole and L-serine. The polypeptide is Tryptophan synthase beta chain (Klebsiella pneumoniae (strain 342)).